The sequence spans 63 residues: Large ribosomal subunit protein uL29 (63 aa).

This sequence belongs to the universal ribosomal protein uL29 family.

This Hahella chejuensis (strain KCTC 2396) protein is Large ribosomal subunit protein uL29.